A 572-amino-acid chain; its full sequence is MSSSAPDDTQASRLDADQISTRSSSYASDNDTDSTETRIQRNKEKQAIRLLAFISANIIALACGSIVVFSLYAPLLQSRLHYSQFQVNAVAISGSVALYLPISGVGYICDRVGLKPLALTGGILFGSGYGLAAGVYRKLDLEYRSHPEYRVDNDWSLPFLMLSFVFVGVATCCLYMAAVSSCAKNFGKGRYRGLALATPITCFGLSPMWLSQAGTRLFTETRPDGSKGDLDVFRFFLFLAALTFFMGILGTFTLRVVDEDELIDEAIEELEQSGLLDGSSLLGRTERSYGATGEETESSALLDPSKDNAKWKKNWVLNAETRSFLADRTMWPFALAFLLIVGPGEAFINNLGTIIGTLTPPEMEGWSHRTSAATHVSIFGITNTASRIFIGTLTDLLAPYPHTQHVQGPSTRSAVSSRFSISRVAFMAFFASMLSIGLLILASGLVQNHAERFWLVSGLVGAGYGAIFSLTPLMVTIIWGVENFATNYGLIGMLPAAGSTFWGLVYSATYQNGANKSKAGPEGSDRDDLFCYGEQCYAPTYWAETITVWIAVGLLLWAWKGRGGWSQRGIII.

Residues 1-29 show a composition bias toward polar residues; it reads MSSSAPDDTQASRLDADQISTRSSSYASD. The disordered stretch occupies residues 1–39; the sequence is MSSSAPDDTQASRLDADQISTRSSSYASDNDTDSTETRI. An N-linked (GlcNAc...) asparagine glycan is attached at Asn30. 10 helical membrane passes run 50 to 70, 89 to 109, 116 to 136, 159 to 179, 193 to 213, 232 to 252, 335 to 355, 426 to 446, 459 to 479, and 488 to 508; these read LLAF…VVFS, AVAI…GYIC, PLAL…AGVY, FLML…MAAV, GLAL…LSQA, VFRF…LGTF, LAFL…GTII, FMAF…SGLV, LVGA…TIIW, and YGLI…VYSA. Asn515 carries N-linked (GlcNAc...) asparagine glycosylation. Residues 539 to 559 form a helical membrane-spanning segment; that stretch reads PTYWAETITVWIAVGLLLWAW.

It belongs to the major facilitator superfamily.

The protein resides in the vacuole membrane. Probable transporter. The sequence is that of Probable transporter MCH1 (MCH1) from Gibberella zeae (strain ATCC MYA-4620 / CBS 123657 / FGSC 9075 / NRRL 31084 / PH-1) (Wheat head blight fungus).